The chain runs to 382 residues: Protein phosphatase 1A (382 aa).

Residue G2 is the site of N-myristoyl glycine attachment. Residues R23–F291 enclose the PPM-type phosphatase domain. Mn(2+) contacts are provided by D60, G61, D239, and D282. S375 and S377 each carry phosphoserine.

Belongs to the PP2C family. Monomer. Interacts with SMAD2; the interaction dephosphorylates SMAD2 in its C-terminal SXS motif resulting in disruption of the SMAD2/SMAD4 complex, SMAD2 nuclear export and termination of the TGF-beta-mediated signaling. Interacts with SMAD2; the interaction dephosphorylates SMAD2 in its C-terminal SXS motif resulting in disruption of the SMAD2/SMAD4 complex, SMAD2 nuclear export and termination of the TGF-beta-mediated signaling. Interacts with the phosphorylated form of IKBKB/IKKB. It depends on Mg(2+) as a cofactor. Requires Mn(2+) as cofactor. In terms of processing, N-myristoylation is essential for the recognition of its substrates for dephosphorylation.

It localises to the nucleus. The protein localises to the cytoplasm. It is found in the cytosol. Its subcellular location is the membrane. The enzyme catalyses O-phospho-L-seryl-[protein] + H2O = L-seryl-[protein] + phosphate. It catalyses the reaction O-phospho-L-threonyl-[protein] + H2O = L-threonyl-[protein] + phosphate. Enzyme with a broad specificity. Negatively regulates TGF-beta signaling through dephosphorylating SMAD2 and SMAD3, resulting in their dissociation from SMAD4, nuclear export of the SMADs and termination of the TGF-beta-mediated signaling. Dephosphorylates PRKAA1 and PRKAA2. Plays an important role in the termination of TNF-alpha-mediated NF-kappa-B activation through dephosphorylating and inactivating IKBKB/IKKB. The polypeptide is Protein phosphatase 1A (PPM1A) (Oryctolagus cuniculus (Rabbit)).